The sequence spans 225 residues: uncharacterized protein (225 aa).

The first 21 residues, 1-21 (MSLHYYLFIFWILAFVQFSHA), serve as a signal peptide directing secretion.

In terms of tissue distribution, prismatic layer of shell (at protein level).

The protein resides in the secreted. This is an uncharacterized protein from Margaritifera margaritifera (Freshwater pearl mussel).